The chain runs to 900 residues: Isoleucine--tRNA ligase (900 aa).

The 'HIGH' region motif lies at 58–68 (PYANGNIHIGH). Glu-552 contributes to the L-isoleucyl-5'-AMP binding site. Residues 593–597 (KMSKS) carry the 'KMSKS' region motif. An ATP-binding site is contributed by Lys-596.

The protein belongs to the class-I aminoacyl-tRNA synthetase family. IleS type 1 subfamily. In terms of assembly, monomer.

It localises to the cytoplasm. It carries out the reaction tRNA(Ile) + L-isoleucine + ATP = L-isoleucyl-tRNA(Ile) + AMP + diphosphate. In terms of biological role, catalyzes the attachment of isoleucine to tRNA(Ile). As IleRS can inadvertently accommodate and process structurally similar amino acids such as valine, to avoid such errors it has two additional distinct tRNA(Ile)-dependent editing activities. One activity is designated as 'pretransfer' editing and involves the hydrolysis of activated Val-AMP. The other activity is designated 'posttransfer' editing and involves deacylation of mischarged Val-tRNA(Ile). The chain is Isoleucine--tRNA ligase from Ureaplasma parvum serovar 3 (strain ATCC 700970).